The following is a 112-amino-acid chain: CRISPR-associated endoribonuclease Cas2 2 (112 aa).

Mg(2+) is bound at residue Asp-15.

The protein belongs to the CRISPR-associated endoribonuclease Cas2 protein family. In terms of assembly, homodimer, forms a heterotetramer with a Cas1 homodimer. Mg(2+) serves as cofactor.

In terms of biological role, CRISPR (clustered regularly interspaced short palindromic repeat), is an adaptive immune system that provides protection against mobile genetic elements (viruses, transposable elements and conjugative plasmids). CRISPR clusters contain sequences complementary to antecedent mobile elements and target invading nucleic acids. CRISPR clusters are transcribed and processed into CRISPR RNA (crRNA). Functions as a ssRNA-specific endoribonuclease. Involved in the integration of spacer DNA into the CRISPR cassette. In Rhodospirillum rubrum (strain ATCC 11170 / ATH 1.1.1 / DSM 467 / LMG 4362 / NCIMB 8255 / S1), this protein is CRISPR-associated endoribonuclease Cas2 2.